A 221-amino-acid chain; its full sequence is Lectin L6 (221 aa).

6 tandem repeats follow at residues 1-38 (VQWHQIPGKLMHITATPHFLWGVNSNQQIYLCRQPCYD), 39-75 (GQWTQISGSLKQVDADDHEVWGVNRNDDIYKRPVDGS), 76-113 (GSWVRVSGKLKHVSASGYGYIWGVNSNDQIYKCPKPCN), 114-150 (GAWTQVNGRLKQIDGGQSMVYGVNSANAIYRRPVDGS), 151-188 (GSWQQISGSLKHITGSGLSEVFGVNSNDQIYRCTKPCS), and 189-221 (GQWSLIDGRLKQCDATGNTIVGVNSVDNIYRSG). Residues 1–221 (VQWHQIPGKL…NSVDNIYRSG (221 aa)) form a 6 X approximate tandem repeats region. Residues Cys-32 and Cys-36 are joined by a disulfide bond. A disulfide bond links Cys-108 and Cys-112. Cysteines 183 and 187 form a disulfide.

It belongs to the tectonin family. In terms of tissue distribution, hemocytes.

It is found in the cytoplasmic vesicle. The protein localises to the secretory vesicle. In terms of biological role, lipopolysaccharide-binding protein with Gram-negative antibacterial activity. Binds zinc and calcium. The polypeptide is Lectin L6 (Tachypleus tridentatus (Japanese horseshoe crab)).